The following is a 60-amino-acid chain: Lantibiotic Pep5 (60 aa).

Positions 1–26 (MKNNKNLFDLEIKKETSQNTDELEPQ) are excised as a propeptide. A disordered region spans residues 1–29 (MKNNKNLFDLEIKKETSQNTDELEPQTAG). T27 bears the 2-oxobutanoic acid mark. The lanthionine (Ser-Cys) cross-link spans 35–39 (SVKQC). 2,3-didehydrobutyrine is present on residues T42 and T46. The segment at residues 50–53 (TVSC) is a cross-link (beta-methyllanthionine (Thr-Cys)). A cross-link (lanthionine (Ser-Cys)) is located at residues 52–59 (SCKGKNGC).

Belongs to the type A lantibiotic family. Post-translationally, maturation of lantibiotics involves the enzymatic conversion of Thr, and Ser into dehydrated AA and the formation of thioether bonds with cysteine. This is followed by membrane translocation and cleavage of the modified precursor. In terms of processing, after proteolysis of the propeptide, the N-terminal 2,3-didehydrobutyrine hydrolyzes to 2-oxobutanoic acid, possibly spontaneously.

In terms of biological role, lanthionine-containing peptide antibiotic (lantibiotic) active on Gram-positive bacteria. The bactericidal activity of lantibiotics is based on depolarization of energized bacterial cytoplasmic membranes, initiated by the formation of aqueous transmembrane pores. This is Lantibiotic Pep5 (pepA) from Staphylococcus epidermidis.